The sequence spans 292 residues: Probable endonuclease 4 (292 aa).

Residues His-69, His-109, Glu-145, Asp-179, His-182, His-216, Asp-229, His-231, and Glu-261 each contribute to the Zn(2+) site.

The protein belongs to the AP endonuclease 2 family. It depends on Zn(2+) as a cofactor.

It carries out the reaction Endonucleolytic cleavage to 5'-phosphooligonucleotide end-products.. Functionally, endonuclease IV plays a role in DNA repair. It cleaves phosphodiester bonds at apurinic or apyrimidinic (AP) sites, generating a 3'-hydroxyl group and a 5'-terminal sugar phosphate. In Desulfotalea psychrophila (strain LSv54 / DSM 12343), this protein is Probable endonuclease 4.